The primary structure comprises 315 residues: 3-chlorobenzoate-3,4-dioxygenase reductase subunit (315 aa).

Position 1–103 (1–103 (MVAIDQHDTY…GATTRISAPR (103 aa))) interacts with FMN. The FAD-binding FR-type domain maps to 7–109 (HDTYSVRVIS…SAPRNAFALD (103 aa)). In terms of domain architecture, 2Fe-2S ferredoxin-type spans 228 to 315 (NEFTVNLARS…ALSPELTLDL (88 aa)). Residues cysteine 264, cysteine 269, cysteine 272, and cysteine 302 each contribute to the [2Fe-2S] cluster site.

Belongs to the PDR/VanB family. This dioxygenase system consists of two proteins: phthalate oxygenase and phthalate oxygenase reductase. Requires FMN as cofactor.

In Comamonas testosteroni (Pseudomonas testosteroni), this protein is 3-chlorobenzoate-3,4-dioxygenase reductase subunit (cbaB).